Here is a 425-residue protein sequence, read N- to C-terminus: Protein translocase subunit SecY (425 aa).

A run of 10 helical transmembrane segments spans residues 15-35, 62-82, 113-131, 139-159, 168-188, 201-221, 266-286, 304-324, 364-384, and 385-405; these read LLSLGILLFIRMGTFLPVPGI, TVVVGLFTLNIFPYINASIIM, LLTLGWSLIQSTSVAFYLK, LVLAFEIVIWLTTGAMIVLWL, LGNGPSLLIYTNIVSSLPGFV, IGSWLLSGFVLFVALYGIVLL, PIILTTAVLVIPTFIYNLGLL, IIYWVSYFVLILLFSLFYSTI, LLGAIMLALLATLPNIIQAIL, and SLSGFTNLGTTSLLILVGVIL.

Belongs to the SecY/SEC61-alpha family. In terms of assembly, component of the plastid Sec protein translocase complex, which is composed of at least SecY, SecE and SecG.

Its subcellular location is the plastid. It localises to the chloroplast thylakoid membrane. Functionally, the central subunit of the protein translocation channel SecYE. Consists of two halves formed by TMs 1-5 and 6-10. These two domains form a lateral gate at the front which open onto the bilayer between TMs 2 and 7, and are clamped together by SecE at the back. The channel is closed by both a pore ring composed of hydrophobic SecY resides and a short helix (helix 2A) on the extracellular side of the membrane which forms a plug. In Trieres chinensis (Marine centric diatom), this protein is Protein translocase subunit SecY.